We begin with the raw amino-acid sequence, 205 residues long: Probable GTP-binding protein EngB (205 aa).

In terms of domain architecture, EngB-type G spans 25–199 (NGIEIAFIGY…KLSLNSSYKK (175 aa)). GTP contacts are provided by residues 33-40 (GYSNTGKS), 60-64 (GRTQL), 78-81 (DLPG), 145-148 (TKCD), and 178-180 (FSS). Mg(2+)-binding residues include S40 and T62.

It belongs to the TRAFAC class TrmE-Era-EngA-EngB-Septin-like GTPase superfamily. EngB GTPase family. Requires Mg(2+) as cofactor.

Functionally, necessary for normal cell division and for the maintenance of normal septation. This is Probable GTP-binding protein EngB from Buchnera aphidicola subsp. Acyrthosiphon pisum (strain 5A).